The primary structure comprises 224 residues: Protein GrpE (224 aa).

2 stretches are compositionally biased toward polar residues: residues 1–16 (MSGDASTSAQDQNVES) and 209–224 (ESSSDAASEQPQEGDA). 2 disordered regions span residues 1–35 (MSGDASTSAQDQNVESNDVPAIPDVDAGTPIDPVV) and 203–224 (SMGPGPESSSDAASEQPQEGDA).

The protein belongs to the GrpE family. Homodimer.

Its subcellular location is the cytoplasm. Participates actively in the response to hyperosmotic and heat shock by preventing the aggregation of stress-denatured proteins, in association with DnaK and GrpE. It is the nucleotide exchange factor for DnaK and may function as a thermosensor. Unfolded proteins bind initially to DnaJ; upon interaction with the DnaJ-bound protein, DnaK hydrolyzes its bound ATP, resulting in the formation of a stable complex. GrpE releases ADP from DnaK; ATP binding to DnaK triggers the release of the substrate protein, thus completing the reaction cycle. Several rounds of ATP-dependent interactions between DnaJ, DnaK and GrpE are required for fully efficient folding. This Synechococcus sp. (strain CC9902) protein is Protein GrpE.